A 124-amino-acid chain; its full sequence is Large ribosomal subunit protein uL18 (124 aa).

This sequence belongs to the universal ribosomal protein uL18 family. In terms of assembly, part of the 50S ribosomal subunit; part of the 5S rRNA/L5/L18/L25 subcomplex. Contacts the 5S and 23S rRNAs.

Functionally, this is one of the proteins that bind and probably mediate the attachment of the 5S RNA into the large ribosomal subunit, where it forms part of the central protuberance. This Thermomicrobium roseum (strain ATCC 27502 / DSM 5159 / P-2) protein is Large ribosomal subunit protein uL18.